Reading from the N-terminus, the 213-residue chain is Glutathione S-transferase (213 aa).

The 78-residue stretch at alanine 4–proline 81 folds into the GST N-terminal domain. The GST C-terminal domain maps to aspartate 86–serine 211.

This sequence belongs to the GST superfamily. Zeta family.

The protein localises to the cytoplasm. It carries out the reaction RX + glutathione = an S-substituted glutathione + a halide anion + H(+). Functionally, has a glutathione transferase activity with ethacrynic acid and nitrophenyl acetate. Has low glutathione peroxidase activity with cumene hydroperoxide. In Triticum aestivum (Wheat), this protein is Glutathione S-transferase (GSTZ1).